We begin with the raw amino-acid sequence, 227 residues long: Thiamine-phosphate synthase (227 aa).

4-amino-2-methyl-5-(diphosphooxymethyl)pyrimidine is bound by residues 50–54 (QFRQK) and Asp82. Asp83 and Asp102 together coordinate Mg(2+). Position 121 (Thr121) interacts with 4-amino-2-methyl-5-(diphosphooxymethyl)pyrimidine. 2-[(2R,5Z)-2-carboxy-4-methylthiazol-5(2H)-ylidene]ethyl phosphate is bound at residue 147–149 (TTS). Lys150 serves as a coordination point for 4-amino-2-methyl-5-(diphosphooxymethyl)pyrimidine. 2-[(2R,5Z)-2-carboxy-4-methylthiazol-5(2H)-ylidene]ethyl phosphate is bound by residues Gly178 and 198–199 (LS).

This sequence belongs to the thiamine-phosphate synthase family. It depends on Mg(2+) as a cofactor.

It carries out the reaction 2-[(2R,5Z)-2-carboxy-4-methylthiazol-5(2H)-ylidene]ethyl phosphate + 4-amino-2-methyl-5-(diphosphooxymethyl)pyrimidine + 2 H(+) = thiamine phosphate + CO2 + diphosphate. The catalysed reaction is 2-(2-carboxy-4-methylthiazol-5-yl)ethyl phosphate + 4-amino-2-methyl-5-(diphosphooxymethyl)pyrimidine + 2 H(+) = thiamine phosphate + CO2 + diphosphate. It catalyses the reaction 4-methyl-5-(2-phosphooxyethyl)-thiazole + 4-amino-2-methyl-5-(diphosphooxymethyl)pyrimidine + H(+) = thiamine phosphate + diphosphate. It functions in the pathway cofactor biosynthesis; thiamine diphosphate biosynthesis; thiamine phosphate from 4-amino-2-methyl-5-diphosphomethylpyrimidine and 4-methyl-5-(2-phosphoethyl)-thiazole: step 1/1. In terms of biological role, condenses 4-methyl-5-(beta-hydroxyethyl)thiazole monophosphate (THZ-P) and 2-methyl-4-amino-5-hydroxymethyl pyrimidine pyrophosphate (HMP-PP) to form thiamine monophosphate (TMP). In Salinibacter ruber (strain DSM 13855 / M31), this protein is Thiamine-phosphate synthase.